The primary structure comprises 133 residues: Large ribosomal subunit protein uL15 (133 aa).

Positions 1–57 (MALEKLTPAAGSTHATKRIGRGQGSGNGKTAGKGNKGQRARKGYNEKRGFEGGQQPL) are disordered. Gly residues predominate over residues 21–35 (RGQGSGNGKTAGKGN).

It belongs to the universal ribosomal protein uL15 family. Part of the 50S ribosomal subunit.

Binds to the 23S rRNA. In Campylobacter concisus (strain 13826), this protein is Large ribosomal subunit protein uL15.